The sequence spans 254 residues: Large ribosomal subunit protein uL2B (254 aa).

Residue lysine 46 forms a Glycyl lysine isopeptide (Lys-Gly) (interchain with G-Cter in ubiquitin) linkage. Position 52 is a phosphoserine (serine 52). Lysine 93 participates in a covalent cross-link: Glycyl lysine isopeptide (Lys-Gly) (interchain with G-Cter in ubiquitin). The residue at position 95 (serine 95) is a Phosphoserine. Glycyl lysine isopeptide (Lys-Gly) (interchain with G-Cter in ubiquitin) cross-links involve residues lysine 119 and lysine 145. 3 positions are modified to phosphoserine: serine 159, serine 160, and serine 249.

It belongs to the universal ribosomal protein uL2 family. Component of the large ribosomal subunit (LSU). Mature yeast ribosomes consist of a small (40S) and a large (60S) subunit. The 40S small subunit contains 1 molecule of ribosomal RNA (18S rRNA) and 33 different proteins (encoded by 57 genes). The large 60S subunit contains 3 rRNA molecules (25S, 5.8S and 5S rRNA) and 46 different proteins (encoded by 81 genes).

It localises to the cytoplasm. Its function is as follows. Component of the ribosome, a large ribonucleoprotein complex responsible for the synthesis of proteins in the cell. The small ribosomal subunit (SSU) binds messenger RNAs (mRNAs) and translates the encoded message by selecting cognate aminoacyl-transfer RNA (tRNA) molecules. The large subunit (LSU) contains the ribosomal catalytic site termed the peptidyl transferase center (PTC), which catalyzes the formation of peptide bonds, thereby polymerizing the amino acids delivered by tRNAs into a polypeptide chain. The nascent polypeptides leave the ribosome through a tunnel in the LSU and interact with protein factors that function in enzymatic processing, targeting, and the membrane insertion of nascent chains at the exit of the ribosomal tunnel. The sequence is that of Large ribosomal subunit protein uL2B from Saccharomyces cerevisiae (strain ATCC 204508 / S288c) (Baker's yeast).